The following is a 449-amino-acid chain: N-succinylarginine dihydrolase (449 aa).

Residues glycine 19–serine 28, asparagine 110, and histidine 137–arginine 138 each bind substrate. The segment at tyrosine 23–arginine 43 is disordered. Over residues asparagine 25–asparagine 37 the composition is skewed to polar residues. Glutamate 174 is an active-site residue. Arginine 214 provides a ligand contact to substrate. Residue histidine 250 is part of the active site. 2 residues coordinate substrate: aspartate 252 and asparagine 365. Cysteine 371 serves as the catalytic Nucleophile.

This sequence belongs to the succinylarginine dihydrolase family. Homodimer.

It carries out the reaction N(2)-succinyl-L-arginine + 2 H2O + 2 H(+) = N(2)-succinyl-L-ornithine + 2 NH4(+) + CO2. It participates in amino-acid degradation; L-arginine degradation via AST pathway; L-glutamate and succinate from L-arginine: step 2/5. Functionally, catalyzes the hydrolysis of N(2)-succinylarginine into N(2)-succinylornithine, ammonia and CO(2). This Pseudomonas entomophila (strain L48) protein is N-succinylarginine dihydrolase.